Consider the following 593-residue polypeptide: Aspartate--tRNA ligase (593 aa).

Residue E180 participates in L-aspartate binding. The tract at residues 204–207 is aspartate; sequence QIFK. Residue R226 coordinates L-aspartate. ATP-binding positions include 226 to 228 and Q235; that span reads RDE. H453 provides a ligand contact to L-aspartate. E487 contacts ATP. Residue R494 coordinates L-aspartate. ATP is bound at residue 539 to 542; sequence GLDR.

It belongs to the class-II aminoacyl-tRNA synthetase family. Type 1 subfamily. As to quaternary structure, homodimer.

Its subcellular location is the cytoplasm. It catalyses the reaction tRNA(Asp) + L-aspartate + ATP = L-aspartyl-tRNA(Asp) + AMP + diphosphate. In terms of biological role, catalyzes the attachment of L-aspartate to tRNA(Asp) in a two-step reaction: L-aspartate is first activated by ATP to form Asp-AMP and then transferred to the acceptor end of tRNA(Asp). This is Aspartate--tRNA ligase from Clostridium botulinum (strain 657 / Type Ba4).